The primary structure comprises 224 residues: MSIRDWPAAERPRERLLEQGAISLSDAELLAIFLRTGVAGKSAVDLARHLLRRFGSLRRLLEADQLTFTRQLGLGPAKYALLQAVLEMARRHLAEKLHRQSALENPLVVRDYLKSMLRHEPHEVFGCLFLDTRHRVLTFEVLFQGSIDSTTVYPRQVIKRALAHNAAAVILCHNHPSGICEPSPADRVVTRRLQEALELIDVRVLDHFIVGEGDPLSMAEYGWI.

Positions 102 to 224 (ALENPLVVRD…PLSMAEYGWI (123 aa)) constitute an MPN domain. Zn(2+)-binding residues include H173, H175, and D186. Positions 173-186 (HNHPSGICEPSPAD) match the JAMM motif motif.

This sequence belongs to the UPF0758 family.

The sequence is that of UPF0758 protein PFL_6051 from Pseudomonas fluorescens (strain ATCC BAA-477 / NRRL B-23932 / Pf-5).